The primary structure comprises 34 residues: Voltage sensor toxin 3 (34 aa).

Disulfide bonds link C2–C17, C9–C22, and C16–C29.

It belongs to the neurotoxin 10 (Hwtx-1) family. 61 (VSTX3) subfamily. As to expression, expressed by the venom gland.

The protein resides in the secreted. Potent voltage-gated sodium channel blocker (IC(50)=190 nM and 210 nM on human and rat Nav1.3/SCN3A respectively, 430 nM on human Nav1.7/SCN9A, 770 nM and 290 nM on human and rat Nav1.8/SCN10A, respectively). Binds the voltage-sensor domain of the potassium channel KvAP (from Aeropyrum pernix) and weakly inhibits this channel. The polypeptide is Voltage sensor toxin 3 (Grammostola rosea (Chilean rose tarantula)).